A 343-amino-acid chain; its full sequence is uncharacterized protein (343 aa).

This is an uncharacterized protein from Tortricidae (ClGV).